Here is a 186-residue protein sequence, read N- to C-terminus: FMN reductase (NADPH) (186 aa).

Belongs to the SsuE family.

The catalysed reaction is FMNH2 + NADP(+) = FMN + NADPH + 2 H(+). The polypeptide is FMN reductase (NADPH) (msuE) (Pseudomonas aeruginosa (strain ATCC 15692 / DSM 22644 / CIP 104116 / JCM 14847 / LMG 12228 / 1C / PRS 101 / PAO1)).